A 115-amino-acid polypeptide reads, in one-letter code: Large ribosomal subunit protein bL20 (115 aa).

Belongs to the bacterial ribosomal protein bL20 family.

Functionally, binds directly to 23S ribosomal RNA and is necessary for the in vitro assembly process of the 50S ribosomal subunit. It is not involved in the protein synthesizing functions of that subunit. The polypeptide is Large ribosomal subunit protein bL20 (Pelodictyon phaeoclathratiforme (strain DSM 5477 / BU-1)).